Reading from the N-terminus, the 373-residue chain is 4-hydroxy-3-methylbut-2-en-1-yl diphosphate synthase (flavodoxin) (373 aa).

Residues Cys-269, Cys-272, Cys-304, and Glu-311 each coordinate [4Fe-4S] cluster.

This sequence belongs to the IspG family. It depends on [4Fe-4S] cluster as a cofactor.

It catalyses the reaction (2E)-4-hydroxy-3-methylbut-2-enyl diphosphate + oxidized [flavodoxin] + H2O + 2 H(+) = 2-C-methyl-D-erythritol 2,4-cyclic diphosphate + reduced [flavodoxin]. It functions in the pathway isoprenoid biosynthesis; isopentenyl diphosphate biosynthesis via DXP pathway; isopentenyl diphosphate from 1-deoxy-D-xylulose 5-phosphate: step 5/6. Converts 2C-methyl-D-erythritol 2,4-cyclodiphosphate (ME-2,4cPP) into 1-hydroxy-2-methyl-2-(E)-butenyl 4-diphosphate. This chain is 4-hydroxy-3-methylbut-2-en-1-yl diphosphate synthase (flavodoxin), found in Baumannia cicadellinicola subsp. Homalodisca coagulata.